The primary structure comprises 898 residues: Vacuolar membrane protease (898 aa).

The Cytoplasmic segment spans residues 1–14 (MGIVDYLVAAVSFR). A helical transmembrane segment spans residues 15 to 35 (TLPTTFVAVLVYLAIFISVLI). At 36–342 (TDELPATPKD…LFGQALIVFP (307 aa)) the chain is on the vacuolar side. 3 N-linked (GlcNAc...) asparagine glycosylation sites follow: asparagine 50, asparagine 103, and asparagine 110. Zn(2+) contacts are provided by histidine 139 and aspartate 151. Catalysis depends on glutamate 183, which acts as the Proton acceptor. Glutamate 184 lines the Zn(2+) pocket. A glycan (N-linked (GlcNAc...) asparagine) is linked at asparagine 200. Positions 209 and 284 each coordinate Zn(2+). A helical membrane pass occupies residues 343–365 (LSAMITFNIVFLVVGPIMLALLV). Residues 366 to 411 (TFDIVARHRRQEMIGGGYEEQGFFARAWTSFKSFRWVGGFWKHAKF) lie on the Cytoplasmic side of the membrane. Residues 412–432 (WVALAVTVGLQVLLCVGYLYI) form a helical membrane-spanning segment. Residue asparagine 433 is a topological domain, vacuolar. Residues 434–454 (PLIAYSSSHIVLLSFLSLAYL) form a helical membrane-spanning segment. Residues 455–479 (STYLVHNIPSPTDTYGSHLPEQQKQ) are Cytoplasmic-facing. A helical transmembrane segment spans residues 480–500 (AALFQLYFFTWILLLAATVVG). Topologically, residues 501–509 (AKLSVGSFY) are vacuolar. The helical transmembrane segment at 510–530 (ILSLWNAVLFAACAIGSIAGL) threads the bilayer. Residues 531–593 (LSSHTVEGDA…PGGKEGEEVS (63 aa)) lie on the Cytoplasmic side of the membrane. A helical membrane pass occupies residues 594-614 (GAIGWWFVQFVLSVPAVVILV). The Vacuolar segment spans residues 615-635 (SQLALLMLAATEQTLADGSPA). The helical transmembrane segment at 636-656 (VTVYGGASLMSVLAILPLAPF) threads the bilayer. The Cytoplasmic portion of the chain corresponds to 657-664 (ACKLHRRV). The chain crosses the membrane as a helical span at residues 665-685 (AYVALVVLIASTAYAWLVFPF). Over 686-898 (SERAPLKVFF…LVEGYKAFAV (213 aa)) the chain is Vacuolar. Asparagine 704, asparagine 733, and asparagine 764 each carry an N-linked (GlcNAc...) asparagine glycan.

Belongs to the peptidase M28 family. The cofactor is Zn(2+).

It localises to the vacuole membrane. May be involved in vacuolar sorting and osmoregulation. This is Vacuolar membrane protease from Schizophyllum commune (strain H4-8 / FGSC 9210) (Split gill fungus).